Reading from the N-terminus, the 808-residue chain is Protein NLP5 (808 aa).

Positions P56–Y68 are enriched in polar residues. The disordered stretch occupies residues P56–Q83. The region spanning N536 to H617 is the RWP-RK domain. A disordered region spans residues S660–E680. Low complexity predominate over residues S663–S673. The PB1 domain occupies F710–S793.

The protein resides in the nucleus. Its function is as follows. Probable transcription factor. In Arabidopsis thaliana (Mouse-ear cress), this protein is Protein NLP5 (NLP5).